Reading from the N-terminus, the 81-residue chain is Large ribosomal subunit protein bL31B (81 aa).

This sequence belongs to the bacterial ribosomal protein bL31 family. Type B subfamily. In terms of assembly, part of the 50S ribosomal subunit.

This is Large ribosomal subunit protein bL31B from Exiguobacterium sibiricum (strain DSM 17290 / CCUG 55495 / CIP 109462 / JCM 13490 / 255-15).